The chain runs to 340 residues: MQAIPIKTIGDPSLCDLVDRFQRQYTYLRLSITEVCNFRCNYCLPDGYRPPSHKQRFLNLVEIKRLARTFANLGTEKIRITGGEPTLRKDFLEIVETISQTEGIHKIALTTNGYRMERDIHLWQQVGITDLNISVDSLDPRQFQLITGENKLQSILKGIDRAFELGYKKIKVNAVLMKQYTAAELDKFLAWIKHKPIQMRFIELMETGEMDNFFKTQHLSGQTVMQRLLAEGWRLQPKAVNDGPAKVLAHPDYQGEIGLIMPYEKNFCASCNRLRVSATGKLHLCLFGEEGLDLRDLLLSDEQQPQLAARLKSALQTKREHHYLHIGNSGIRNNLASIGG.

Residues 20-246 form the Radical SAM core domain; the sequence is RFQRQYTYLR…PKAVNDGPAK (227 aa). Residue Arg-29 coordinates GTP. Residues Cys-36 and Cys-40 each coordinate [4Fe-4S] cluster. Tyr-42 lines the S-adenosyl-L-methionine pocket. Cys-43 contributes to the [4Fe-4S] cluster binding site. Residue Arg-79 coordinates GTP. Gly-83 lines the S-adenosyl-L-methionine pocket. Position 110 (Thr-110) interacts with GTP. Ser-134 is an S-adenosyl-L-methionine binding site. Lys-171 lines the GTP pocket. Met-205 is an S-adenosyl-L-methionine binding site. Residues Cys-268 and Cys-271 each contribute to the [4Fe-4S] cluster site. Position 273–275 (273–275) interacts with GTP; the sequence is RLR. Cys-285 lines the [4Fe-4S] cluster pocket.

The protein belongs to the radical SAM superfamily. MoaA family. As to quaternary structure, monomer and homodimer. [4Fe-4S] cluster serves as cofactor.

It catalyses the reaction GTP + AH2 + S-adenosyl-L-methionine = (8S)-3',8-cyclo-7,8-dihydroguanosine 5'-triphosphate + 5'-deoxyadenosine + L-methionine + A + H(+). It functions in the pathway cofactor biosynthesis; molybdopterin biosynthesis. Its function is as follows. Catalyzes the cyclization of GTP to (8S)-3',8-cyclo-7,8-dihydroguanosine 5'-triphosphate. This chain is GTP 3',8-cyclase, found in Haemophilus ducreyi (strain 35000HP / ATCC 700724).